The following is a 171-amino-acid chain: Ribosome maturation factor RimM (171 aa).

The region spanning 97 to 170 (EGEYYYHEII…LVTIHVMEGL (74 aa)) is the PRC barrel domain.

It belongs to the RimM family. In terms of assembly, binds ribosomal protein uS19.

The protein resides in the cytoplasm. In terms of biological role, an accessory protein needed during the final step in the assembly of 30S ribosomal subunit, possibly for assembly of the head region. Essential for efficient processing of 16S rRNA. May be needed both before and after RbfA during the maturation of 16S rRNA. It has affinity for free ribosomal 30S subunits but not for 70S ribosomes. The sequence is that of Ribosome maturation factor RimM from Bacillus cereus (strain ZK / E33L).